Consider the following 309-residue polypeptide: Ribonuclease Z (309 aa).

The Zn(2+) site is built by His-64, His-66, Asp-68, His-69, His-141, Asp-209, and His-267. The Proton acceptor role is filled by Asp-68.

The protein belongs to the RNase Z family. As to quaternary structure, homodimer. Zn(2+) is required as a cofactor.

The catalysed reaction is Endonucleolytic cleavage of RNA, removing extra 3' nucleotides from tRNA precursor, generating 3' termini of tRNAs. A 3'-hydroxy group is left at the tRNA terminus and a 5'-phosphoryl group is left at the trailer molecule.. Functionally, zinc phosphodiesterase, which displays some tRNA 3'-processing endonuclease activity. Probably involved in tRNA maturation, by removing a 3'-trailer from precursor tRNA. In Picrophilus torridus (strain ATCC 700027 / DSM 9790 / JCM 10055 / NBRC 100828 / KAW 2/3), this protein is Ribonuclease Z.